Consider the following 600-residue polypeptide: Proline--tRNA ligase (600 aa).

It belongs to the class-II aminoacyl-tRNA synthetase family. ProS type 1 subfamily. Homodimer.

It localises to the cytoplasm. It catalyses the reaction tRNA(Pro) + L-proline + ATP = L-prolyl-tRNA(Pro) + AMP + diphosphate. Catalyzes the attachment of proline to tRNA(Pro) in a two-step reaction: proline is first activated by ATP to form Pro-AMP and then transferred to the acceptor end of tRNA(Pro). As ProRS can inadvertently accommodate and process non-cognate amino acids such as alanine and cysteine, to avoid such errors it has two additional distinct editing activities against alanine. One activity is designated as 'pretransfer' editing and involves the tRNA(Pro)-independent hydrolysis of activated Ala-AMP. The other activity is designated 'posttransfer' editing and involves deacylation of mischarged Ala-tRNA(Pro). The misacylated Cys-tRNA(Pro) is not edited by ProRS. This is Proline--tRNA ligase from Synechococcus sp. (strain ATCC 27144 / PCC 6301 / SAUG 1402/1) (Anacystis nidulans).